Consider the following 195-residue polypeptide: Thymidine kinase (195 aa).

ATP is bound by residues 15–22 (GSMFSGKS) and 88–91 (DEVQ). Glutamate 89 acts as the Proton acceptor in catalysis. Cysteine 145, cysteine 148, cysteine 183, and cysteine 186 together coordinate Zn(2+).

The protein belongs to the thymidine kinase family. Homotetramer.

The protein resides in the cytoplasm. The enzyme catalyses thymidine + ATP = dTMP + ADP + H(+). This chain is Thymidine kinase, found in Bacillus cereus (strain 03BB102).